A 300-amino-acid polypeptide reads, in one-letter code: Virginiamycin B lyase (300 aa).

Position 231 (His-231) interacts with substrate. Glu-270 contributes to the Mg(2+) binding site. The Proton acceptor role is filled by His-272. Residue Glu-287 participates in Mg(2+) binding.

The protein belongs to the Vgb family. In terms of assembly, monomer. It depends on Mg(2+) as a cofactor.

Its function is as follows. Inactivates the type B streptogramin antibiotics by linearizing the lactone ring at the ester linkage, generating a free phenylglycine carboxylate and converting the threonyl moiety into 2-amino-butenoic acid. The protein is Virginiamycin B lyase of Saccharopolyspora erythraea (strain ATCC 11635 / DSM 40517 / JCM 4748 / NBRC 13426 / NCIMB 8594 / NRRL 2338).